The primary structure comprises 132 residues: Insulin-like 3 (132 aa).

The first 24 residues, 1–24 (MSPRPLAWALVLLGAALAVALALG), serve as a signal peptide directing secretion. Disulfide bonds link C36-C117, C48-C130, and C116-C121. A propeptide spans 61–104 (VAGGDRELLQWLEGRHLHGQVSDGDPMLVLVPQALPQASLHHHH) (c peptide like).

The protein belongs to the insulin family. As to quaternary structure, heterodimer of a B chain and an A chain linked by two disulfide bonds. More strongly expressed in testis than in ovary.

Its subcellular location is the secreted. Its function is as follows. Seems to play a role in testicular function. May be a trophic hormone with a role in testicular descent in fetal life. Is a ligand for LGR8 receptor. In Canis lupus familiaris (Dog), this protein is Insulin-like 3 (INSL3).